The chain runs to 746 residues: Hyperosmolality-gated Ca2+ permeable channel 2.1 (746 aa).

10 helical membrane-spanning segments follow: residues 3 to 23 (ISALLTSAGINISICIVLLSL), 90 to 110 (MVIFSIRIFFIVAVICIAFVL), 144 to 164 (LWVHCLALYIITSAACLLLYF), 357 to 377 (IATLVGAVAFMFVFLIPVTFI), 405 to 425 (VITGYLPSVILILFFYAVPPL), 445 to 465 (ACIKVLYFTIWNVFFVNILSG), 492 to 512 (AGFFMTYCFTSGWASLACEIM), 560 to 580 (VIAPLILPFLLIYFFLAYLIY), 601 to 621 (IFHNTTIFSLILTQIIALGFF), and 623 to 643 (LKLSTVASGFTIPLILLTLLF). The span at 692–702 (LHSQKSSSKAE) shows a compositional bias: polar residues. Residues 692-723 (LHSQKSSSKAECSNPFKKQELPDPEKLKPEEG) form a disordered region. Residues 708–723 (KKQELPDPEKLKPEEG) are compositionally biased toward basic and acidic residues.

It belongs to the CSC1 (TC 1.A.17) family.

It localises to the membrane. Its function is as follows. Acts as an osmosensitive calcium-permeable cation channel. In Arabidopsis thaliana (Mouse-ear cress), this protein is Hyperosmolality-gated Ca2+ permeable channel 2.1.